We begin with the raw amino-acid sequence, 179 residues long: uncharacterized protein (179 aa).

This is an uncharacterized protein from Salmonella typhimurium (strain LT2 / SGSC1412 / ATCC 700720).